Reading from the N-terminus, the 276-residue chain is NAD-capped RNA hydrolase NudC (276 aa).

Residue Arg82 coordinates substrate. Residues Cys112 and Cys115 each contribute to the Zn(2+) site. Glu125 serves as a coordination point for substrate. Zn(2+) is bound by residues Cys130 and Cys133. Residue Tyr138 coordinates substrate. Positions 139–262 constitute a Nudix hydrolase domain; that stretch reads PRISPSMIVL…SIARYLIDVY (124 aa). Ala172, Glu188, and Glu192 together coordinate a divalent metal cation. The Nudix box motif lies at 173-194; it reads GFAEPGESAEDCLIREVREEVQ. Position 206 to 213 (206 to 213) interacts with substrate; that stretch reads QCWPFPHS. Glu233 serves as a coordination point for a divalent metal cation. Ala255 contributes to the substrate binding site.

This sequence belongs to the Nudix hydrolase family. NudC subfamily. Homodimer. Mg(2+) serves as cofactor. The cofactor is Mn(2+). It depends on Zn(2+) as a cofactor.

It catalyses the reaction a 5'-end NAD(+)-phospho-ribonucleoside in mRNA + H2O = a 5'-end phospho-adenosine-phospho-ribonucleoside in mRNA + beta-nicotinamide D-ribonucleotide + 2 H(+). The enzyme catalyses NAD(+) + H2O = beta-nicotinamide D-ribonucleotide + AMP + 2 H(+). The catalysed reaction is NADH + H2O = reduced beta-nicotinamide D-ribonucleotide + AMP + 2 H(+). Functionally, mRNA decapping enzyme that specifically removes the nicotinamide adenine dinucleotide (NAD) cap from a subset of mRNAs by hydrolyzing the diphosphate linkage to produce nicotinamide mononucleotide (NMN) and 5' monophosphate mRNA. The NAD-cap is present at the 5'-end of some mRNAs and stabilizes RNA against 5'-processing. Has preference for mRNAs with a 5'-end purine. Catalyzes the hydrolysis of a broad range of dinucleotide pyrophosphates. The polypeptide is NAD-capped RNA hydrolase NudC (Pseudomonas fluorescens (strain Pf0-1)).